Here is a 453-residue protein sequence, read N- to C-terminus: Insulinoma-associated protein 1b (453 aa).

The interval 1–20 is SNAG domain; the sequence is MPKGFLVKRNKKAALVSYRI. A disordered region spans residues 140-179; sequence NSNRSGTASGAHAPAIQTGAKRPSADAAERKVSSKSAKKP. The segment covering 162–171 has biased composition (basic and acidic residues); sequence PSADAAERKV. The segment at 252-274 adopts a C2H2-type 1 zinc-finger fold; that stretch reads YRCPECEKVFSCPANLASHRRWH. The tract at residues 298-318 is disordered; it reads AEFPSDRDTPSPGLSESGSED. C2H2-type zinc fingers lie at residues 321 to 343, 383 to 406, and 412 to 435; these read YDCQ…ILGH, LTCP…RLLH, and FPCK…NKCH.

This sequence belongs to the INSM1 family.

It is found in the nucleus. In terms of biological role, may act as a transcriptional regulator. May play a role in neurogenesis and neuroendocrine cell differentiation during embryonic development. This chain is Insulinoma-associated protein 1b (insm1b), found in Danio rerio (Zebrafish).